A 167-amino-acid chain; its full sequence is Probable D-lyxose ketol-isomerase (167 aa).

Positions 69, 71, 82, and 137 each coordinate Mn(2+).

Belongs to the D-lyxose ketol-isomerase family. In terms of assembly, homodimer. The cofactor is Mn(2+).

It carries out the reaction D-lyxose = D-xylulose. In terms of biological role, sugar isomerase that catalyzes the reversible isomerization of D-lyxose to D-xylulose. The chain is Probable D-lyxose ketol-isomerase (ydaE) from Bacillus subtilis (strain 168).